We begin with the raw amino-acid sequence, 504 residues long: MSLIEDILQTSSTVTLLGTVLFLLVLYLRSSGSSSEEQGKEPPGPRPLPLLGNMLQLDLKKPYCTLCELSKKYGSIFTVHFGPKKVVVLAGYKTVKQALVNQAEDFGDRDITPVFYDFNQGHGILFANGDSWKEMRRFALTNLRDFGMGKKGSEEKILEEIPYLIEVFEKHEGKAFDTTQSVLYAVSNIISAIVYGSRFEYTDPLFTGMADRAKESIHLTGSASIQMYNMFPWLGPWINNLTRLKKNIADMKMEVIELVRGLKETLNPHMCRGFVDSFLVRKQTLEESGHMDSFYHDDNLVFSVGNLFSAGTDTTGTTLRWGLLLMTKYPHIQDQVQEEISRVIGSRQTLVEDRKNLPYTDAVIHETQRLANIVPMSVPHTTSRDVTFQGYFIKKGTSVIPLLTSVLQDDSEWESPNTFNPSHFLDEQGGFVKRDAFMAFSAGRRVCLGEGLARMELFLFFTSLLQRFRFSPPPGVTEDDLDLTPLLGFTLNPSPHQLCAVSRV.

Cysteine 447 provides a ligand contact to heme.

Belongs to the cytochrome P450 family. It depends on heme as a cofactor.

The protein resides in the endoplasmic reticulum membrane. It is found in the microsome membrane. It carries out the reaction an organic molecule + reduced [NADPH--hemoprotein reductase] + O2 = an alcohol + oxidized [NADPH--hemoprotein reductase] + H2O + H(+). The chain is Cytochrome P450 2K1 (cyp2k1) from Oncorhynchus mykiss (Rainbow trout).